The sequence spans 868 residues: B-cell receptor CD22 (868 aa).

A signal peptide spans Met-1–Ser-21. The 127-residue stretch at Ser-22–Glu-148 folds into the Ig-like V-type domain. Residues Ser-22 to Arg-708 lie on the Extracellular side of the membrane. Disulfide bonds link Cys-41–Cys-177, Cys-46–Cys-112, and Cys-171–Cys-235. N-linked (GlcNAc...) asparagine glycosylation is found at Asn-111 and Asn-122. Arg-130 serves as a coordination point for N-acetylneuraminate. 9 N-linked (GlcNAc...) asparagine glycosylation sites follow: Asn-145, Asn-174, Asn-271, Asn-281, Asn-384, Asn-414, Asn-466, Asn-567, and Asn-595. 6 consecutive Ig-like C2-type domains span residues Pro-153–Arg-250, Pro-257–Thr-347, Pro-352–Asp-435, Pro-440–Asn-521, Pro-526–Ser-603, and Pro-614–Thr-697. 4 cysteine pairs are disulfide-bonded: Cys-278/Cys-330, Cys-374/Cys-417, Cys-463/Cys-505, and Cys-550/Cys-592. The cysteines at positions 637 and 680 are disulfide-linked. Residues Val-709–Met-727 form a helical membrane-spanning segment. At Lys-728 to His-868 the chain is on the cytoplasmic side. Residues Ser-738–Phe-752 show a composition bias toward polar residues. The disordered stretch occupies residues Ser-738–Cys-772. Phosphoserine is present on residues Ser-746, Ser-747, and Ser-750. The ITIM motif 1 motif lies at Val-781–Leu-786. The residue at position 783 (Tyr-783) is a Phosphotyrosine. Residues Glu-790–Ser-812 form a disordered region. Residues Tyr-828, Tyr-843, and Tyr-863 each carry the phosphotyrosine modification. Short sequence motifs (ITIM motif) lie at residues Ile-841–Leu-846 and Val-861–Leu-866.

Belongs to the immunoglobulin superfamily. SIGLEC (sialic acid binding Ig-like lectin) family. Predominantly monomer of isoform CD22-beta. Also found as heterodimer of isoform CD22-beta and a shorter isoform. Interacts with PTPN6/SHP-1, LYN, SYK, PIK3R1/PIK3R2 and PLCG1 upon phosphorylation. Interacts with GRB2, INPP5D and SHC1 upon phosphorylation. May form a complex with INPP5D/SHIP, GRB2 and SHC1. Post-translationally, phosphorylated on tyrosine residues by LYN. Phosphorylation of Tyr-783 and Tyr-843 are involved in binding to SYK. Phosphorylation of Tyr-828 is involved in binding to GRB2. Phosphorylation of Tyr-863 is involved in binding to SYK, PLCG2 and PIK3R1/PIK3R2. In terms of tissue distribution, B-lymphocytes.

Its subcellular location is the cell membrane. Its function is as follows. Most highly expressed siglec (sialic acid-binding immunoglobulin-like lectin) on B-cells that plays a role in various aspects of B-cell biology including differentiation, antigen presentation, and trafficking to bone marrow. Binds to alpha 2,6-linked sialic acid residues of surface molecules such as CD22 itself, CD45 and IgM in a cis configuration. Can also bind to ligands on other cells as an adhesion molecule in a trans configuration. Acts as an inhibitory coreceptor on the surface of B-cells and inhibits B-cell receptor induced signaling, characterized by inhibition of the calcium mobilization and cellular activation. Mechanistically, the immunoreceptor tyrosine-based inhibitory motif domain is phosphorylated by the Src kinase LYN, which in turn leads to the recruitment of the protein tyrosine phosphatase 1/PTPN6, leading to the negative regulation of BCR signaling. If this negative signaling from is of sufficient strength, apoptosis of the B-cell can be induced. In Mus musculus (Mouse), this protein is B-cell receptor CD22.